The sequence spans 913 residues: Calcium-activated chloride channel regulator 1 (913 aa).

The first 21 residues, 1–21 (MGPFKSSVFILILHLLEGALS), serve as a signal peptide directing secretion. The tract at residues 46–199 (DETLIQQIKD…GITGKIEVNK (154 aa)) is metalloprotease domain. H156 is a Zn(2+) binding site. The active site involves E157. H160 and D167 together coordinate Zn(2+). Residues 306 to 475 (IVCLVLDKSG…NGLIDAFGAL (170 aa)) form the VWFA domain. 8 N-linked (GlcNAc...) asparagine glycosylation sites follow: N503, N769, N803, N809, N830, N835, N885, and N889. Residues 866-885 (PPQTPPETPSPDETSAPCPN) form a disordered region.

The protein belongs to the CLCR family. Post-translationally, glycosylated. The translation product is autoproteolytically cleaved by the metalloprotease domain in the endoplasmic reticulum into a N-terminal and a C-terminal products that remain physically associated with each other. The cleavage is necessary for calcium-activated chloride channel (CaCC) activation activity.

The protein resides in the secreted. Its subcellular location is the extracellular space. Functionally, may be involved in mediating calcium-activated chloride conductance. May play critical roles in goblet cell metaplasia, mucus hypersecretion, cystic fibrosis and AHR. May be involved in the regulation of mucus production and/or secretion by goblet cells. Involved in the regulation of tissue inflammation in the innate immune response. May play a role as a tumor suppressor. Induces MUC5AC. The sequence is that of Calcium-activated chloride channel regulator 1 (CLCA1) from Macaca mulatta (Rhesus macaque).